Reading from the N-terminus, the 381-residue chain is Chaperone protein DnaJ (381 aa).

One can recognise a J domain in the interval 5 to 70; that stretch reads DYYEVLGLQK…QKRAAYDQYG (66 aa). The CR-type zinc-finger motif lies at 133 to 211; the sequence is GTTKDIQINT…CHGEGRVHKK (79 aa). Positions 146, 149, 163, 166, 185, 188, 199, and 202 each coordinate Zn(2+). CXXCXGXG motif repeat units follow at residues 146 to 153, 163 to 170, 185 to 192, and 199 to 206; these read CDSCGGSG, CPHCHGSG, CPTCHGSG, and CRSCHGEG.

This sequence belongs to the DnaJ family. Homodimer. Requires Zn(2+) as cofactor.

The protein resides in the cytoplasm. Functionally, participates actively in the response to hyperosmotic and heat shock by preventing the aggregation of stress-denatured proteins and by disaggregating proteins, also in an autonomous, DnaK-independent fashion. Unfolded proteins bind initially to DnaJ; upon interaction with the DnaJ-bound protein, DnaK hydrolyzes its bound ATP, resulting in the formation of a stable complex. GrpE releases ADP from DnaK; ATP binding to DnaK triggers the release of the substrate protein, thus completing the reaction cycle. Several rounds of ATP-dependent interactions between DnaJ, DnaK and GrpE are required for fully efficient folding. Also involved, together with DnaK and GrpE, in the DNA replication of plasmids through activation of initiation proteins. In Haemophilus influenzae (strain 86-028NP), this protein is Chaperone protein DnaJ.